The primary structure comprises 213 residues: Orotate phosphoribosyltransferase (213 aa).

5-phospho-alpha-D-ribose 1-diphosphate is bound at residue lysine 26. Residue 34–35 (FF) coordinates orotate. 5-phospho-alpha-D-ribose 1-diphosphate contacts are provided by residues 72 to 73 (YK), arginine 99, lysine 100, lysine 103, histidine 105, and 124 to 132 (DDVITAGTA). Residues threonine 128 and arginine 156 each contribute to the orotate site.

Belongs to the purine/pyrimidine phosphoribosyltransferase family. PyrE subfamily. In terms of assembly, homodimer. Requires Mg(2+) as cofactor.

The enzyme catalyses orotidine 5'-phosphate + diphosphate = orotate + 5-phospho-alpha-D-ribose 1-diphosphate. It functions in the pathway pyrimidine metabolism; UMP biosynthesis via de novo pathway; UMP from orotate: step 1/2. Functionally, catalyzes the transfer of a ribosyl phosphate group from 5-phosphoribose 1-diphosphate to orotate, leading to the formation of orotidine monophosphate (OMP). This chain is Orotate phosphoribosyltransferase, found in Salmonella arizonae (strain ATCC BAA-731 / CDC346-86 / RSK2980).